Here is a 412-residue protein sequence, read N- to C-terminus: MIIPMLRILLIVLFVLNLVTSKGVLRKVSGDAAPDKAQEPIDDNEEYDDFIPTIDSSVRLDNTIPVPPALPIGLPIIQITTKEPQPPASLTSLPAAPPSAQVAPPAIRPPEAKRTSLEPPQPSTPQASISSTTTVLIRNPTTSIQQLRGPFDDVRVTTVNIGEIVPDTGNDLGEFRKADLSDNMEKEGNENVKDLVKKTTTVNVTNDYYITSSSPTTVMFELQEDTVGEENVFDFDKLFDKKIYIRNDGSTTENTTEQSTTEKSKTTSTYSTTTTAPVNTTSAPTTTHLGTPGTHKKTCIHVKDLKMVDDSVVVQAGTKKGTIEVSVELGEGDDDEENDDDSSEEEETKPPARHVREDKKPVVWKKFEMNCDEEEDDKGKICKLWAAGGLCGTHKPTMFLFCRKTCLCVGPY.

The first 21 residues, 1-21 (MIIPMLRILLIVLFVLNLVTS), serve as a signal peptide directing secretion. Disordered stretches follow at residues 85-134 (QPPA…STTT), 250-294 (STTE…TPGT), and 327-357 (VELG…HVRE). The segment covering 88–105 (ASLTSLPAAPPSAQVAPP) has biased composition (low complexity). The span at 124 to 134 (TPQASISSTTT) shows a compositional bias: polar residues. Composition is skewed to low complexity over residues 250–259 (STTENTTEQS) and 266–293 (TTST…GTPG). Over residues 330 to 347 (GEGDDDEENDDDSSEEEE) the composition is skewed to acidic residues. The segment covering 348–357 (TKPPARHVRE) has biased composition (basic and acidic residues). Residues 371 to 408 (CDEEEDDKGKICKLWAAGGLCGTHKPTMFLFCRKTCLC) form the ShKT domain.

This is an uncharacterized protein from Caenorhabditis elegans.